Here is an 80-residue protein sequence, read N- to C-terminus: MTTANVEQKVKNIIADQLGVGEDEIKITSSFIEDLGADSLDIVELVMAMEEEFEVEIPDEEAENIKTVQDAVNYITTHKK.

One can recognise a Carrier domain in the interval 4–79 (ANVEQKVKNI…DAVNYITTHK (76 aa)). Ser39 carries the O-(pantetheine 4'-phosphoryl)serine modification.

It belongs to the acyl carrier protein (ACP) family. In terms of processing, 4'-phosphopantetheine is transferred from CoA to a specific serine of apo-ACP by AcpS. This modification is essential for activity because fatty acids are bound in thioester linkage to the sulfhydryl of the prosthetic group.

It is found in the cytoplasm. It functions in the pathway lipid metabolism; fatty acid biosynthesis. In terms of biological role, carrier of the growing fatty acid chain in fatty acid biosynthesis. This Anaeromyxobacter sp. (strain Fw109-5) protein is Acyl carrier protein.